A 138-amino-acid polypeptide reads, in one-letter code: Large ribosomal subunit protein bL17 (138 aa).

The disordered stretch occupies residues 118–138 (RDEDAKGKDSGPSQDGAAEAA).

Belongs to the bacterial ribosomal protein bL17 family. Part of the 50S ribosomal subunit. Contacts protein L32.

This is Large ribosomal subunit protein bL17 from Rhodopseudomonas palustris (strain HaA2).